Consider the following 266-residue polypeptide: Beta-lactamase OXA-20 (266 aa).

The first 21 residues, 1-21 (MIIRFLALLFSAVVLVSLGHA), serve as a signal peptide directing secretion. The active-site Acyl-ester intermediate is the S72. The residue at position 75 (K75) is an N6-carboxylysine. Substrate is bound at residue 210–212 (KTG).

The protein belongs to the class-D beta-lactamase family.

The enzyme catalyses a beta-lactam + H2O = a substituted beta-amino acid. Its activity is regulated as follows. Inhibited by clavulanic acid. In terms of biological role, this is an oxacillin-hydrolyzing beta-lactamase. This chain is Beta-lactamase OXA-20 (bla), found in Pseudomonas aeruginosa.